A 332-amino-acid polypeptide reads, in one-letter code: Phosphate acyltransferase (332 aa).

This sequence belongs to the PlsX family. In terms of assembly, homodimer. Probably interacts with PlsY.

It localises to the cytoplasm. The catalysed reaction is a fatty acyl-[ACP] + phosphate = an acyl phosphate + holo-[ACP]. Its pathway is lipid metabolism; phospholipid metabolism. Catalyzes the reversible formation of acyl-phosphate (acyl-PO(4)) from acyl-[acyl-carrier-protein] (acyl-ACP). This enzyme utilizes acyl-ACP as fatty acyl donor, but not acyl-CoA. The chain is Phosphate acyltransferase from Bacillus pumilus (strain SAFR-032).